A 272-amino-acid chain; its full sequence is Glutamate racemase (272 aa).

Substrate is bound by residues 10–11 and 42–43; these read DS and YG. The Proton donor/acceptor role is filled by cysteine 74. Substrate is bound at residue 75 to 76; sequence NT. Cysteine 185 serves as the catalytic Proton donor/acceptor. A substrate-binding site is contributed by 186 to 187; that stretch reads TH.

This sequence belongs to the aspartate/glutamate racemases family.

It catalyses the reaction L-glutamate = D-glutamate. It participates in cell wall biogenesis; peptidoglycan biosynthesis. Its function is as follows. Provides the (R)-glutamate required for cell wall biosynthesis. This chain is Glutamate racemase, found in Bacillus velezensis (strain DSM 23117 / BGSC 10A6 / LMG 26770 / FZB42) (Bacillus amyloliquefaciens subsp. plantarum).